The sequence spans 622 residues: Dehydrogenase xptC (622 aa).

Residues 1 to 18 (MAKLSVILLFRSLLLCGA) form the signal peptide. Residues 47 to 48 (VS), 68 to 69 (EA), and 123 to 126 (NAMI) each bind FAD. Residues N160, N173, N357, N364, and N480 are each glycosylated (N-linked (GlcNAc...) asparagine). 598–599 (PM) serves as a coordination point for FAD.

This sequence belongs to the GMC oxidoreductase family. Homodimer. FAD is required as a cofactor.

Its pathway is secondary metabolite biosynthesis. Its function is as follows. Dehydrogenase involved in the conversion of monodictyphenone to the prenyl xanthones such as emericellin, shamixanthone and epishamixanthone. Monodictyphenone is first converted to variecoxanthone A via a paeciloxanthone intermediate by the consecutive actions of the FAD-dependent monooxygenase mdpD and the xanthone prenyltransferase xptB. XptB catalyzes regular O-prenylation at the hydroxy group of C-7 of the xanthone ring. Variecoxanthone A is further prenylated to emericellin by xptA before being reduced to shamixanthone and epishamixanthone by the dehydrogenase xptC. In Emericella nidulans (strain FGSC A4 / ATCC 38163 / CBS 112.46 / NRRL 194 / M139) (Aspergillus nidulans), this protein is Dehydrogenase xptC.